The chain runs to 148 residues: Urease accessory protein UreE (148 aa).

Belongs to the UreE family.

Its subcellular location is the cytoplasm. Its function is as follows. Involved in urease metallocenter assembly. Binds nickel. Probably functions as a nickel donor during metallocenter assembly. The protein is Urease accessory protein UreE of Halalkalibacterium halodurans (strain ATCC BAA-125 / DSM 18197 / FERM 7344 / JCM 9153 / C-125) (Bacillus halodurans).